The primary structure comprises 295 residues: Proline iminopeptidase (295 aa).

Residues 29–279 enclose the AB hydrolase-1 domain; sequence PLLLLHGGPG…GCGHMPFVQE (251 aa). The active-site Nucleophile is the serine 107. Aspartate 246 is an active-site residue. Histidine 273 serves as the catalytic Proton donor.

This sequence belongs to the peptidase S33 family.

Its subcellular location is the cell envelope. It catalyses the reaction Release of N-terminal proline from a peptide.. Its function is as follows. Releases the N-terminal proline from various substrates. This Lactobacillus delbrueckii subsp. bulgaricus (strain ATCC 11842 / DSM 20081 / BCRC 10696 / JCM 1002 / NBRC 13953 / NCIMB 11778 / NCTC 12712 / WDCM 00102 / Lb 14) protein is Proline iminopeptidase.